The following is a 152-amino-acid chain: Large ribosomal subunit protein eL32 (152 aa).

It belongs to the eukaryotic ribosomal protein eL32 family.

The protein is Large ribosomal subunit protein eL32 (rpl32e) of Pyrobaculum aerophilum (strain ATCC 51768 / DSM 7523 / JCM 9630 / CIP 104966 / NBRC 100827 / IM2).